We begin with the raw amino-acid sequence, 422 residues long: Histidine--tRNA ligase (422 aa).

The protein belongs to the class-II aminoacyl-tRNA synthetase family. As to quaternary structure, homodimer.

It is found in the cytoplasm. The enzyme catalyses tRNA(His) + L-histidine + ATP = L-histidyl-tRNA(His) + AMP + diphosphate + H(+). This is Histidine--tRNA ligase from Vesicomyosocius okutanii subsp. Calyptogena okutanii (strain HA).